A 363-amino-acid chain; its full sequence is 3-dehydroquinate synthase (363 aa).

NAD(+)-binding positions include 134-135 (TT), Lys147, and Lys156. Positions 189, 254, and 271 each coordinate Zn(2+).

The protein belongs to the sugar phosphate cyclases superfamily. Dehydroquinate synthase family. Co(2+) is required as a cofactor. It depends on Zn(2+) as a cofactor. Requires NAD(+) as cofactor.

The protein localises to the cytoplasm. The catalysed reaction is 7-phospho-2-dehydro-3-deoxy-D-arabino-heptonate = 3-dehydroquinate + phosphate. It participates in metabolic intermediate biosynthesis; chorismate biosynthesis; chorismate from D-erythrose 4-phosphate and phosphoenolpyruvate: step 2/7. Functionally, catalyzes the conversion of 3-deoxy-D-arabino-heptulosonate 7-phosphate (DAHP) to dehydroquinate (DHQ). The protein is 3-dehydroquinate synthase of Prochlorococcus marinus (strain MIT 9312).